Here is an 85-residue protein sequence, read N- to C-terminus: Dynein light chain 1, cytoplasmic (85 aa).

The protein belongs to the dynein light chain family. As to quaternary structure, homodimer. Cytoplasmic dynein consists of two catalytic heavy chains (HCs) and a number of non-catalytic subunits which present intermediate chains (ICs), light intermediate chains (LICs) and light chains (LCs). Component of the nuclear pore complex (NPC). NPC constitutes the exclusive means of nucleocytoplasmic transport. NPCs allow the passive diffusion of ions and small molecules and the active, nuclear transport receptor-mediated bidirectional transport of macromolecules such as proteins, RNAs, ribonucleoparticles (RNPs), and ribosomal subunits across the nuclear envelope. Due to its 8-fold rotational symmetry, all subunits are present with 8 copies or multiples thereof.

The protein localises to the cytoplasm. It is found in the cytoskeleton. The protein resides in the nucleus. It localises to the nuclear pore complex. Acts as one of several non-catalytic accessory components of the cytoplasmic dynein complex that are thought to be involved in linking dynein to cargos and to adapter proteins that regulate dynein function. Cytoplasmic dynein 1 acts as a motor for the intracellular retrograde motility of vesicles and organelles along microtubules. May play a role in changing or maintaining the spatial distribution of cytoskeletal structures. Also a component of the nuclear pore complex. This chain is Dynein light chain 1, cytoplasmic (dlc2), found in Schizosaccharomyces pombe (strain 972 / ATCC 24843) (Fission yeast).